The primary structure comprises 425 residues: Caveolae-associated protein 2 (425 aa).

Residues methionine 1 to asparagine 42 are disordered. Residue glycine 2 is modified to N-acetylglycine. Residues glycine 2–alanine 168 are interaction with CAVIN1. A compositionally biased stretch (basic and acidic residues) spans lysine 10–lysine 22. 4 positions are modified to phosphoserine: serine 27, serine 35, serine 37, and serine 51. Coiled-coil stretches lie at residues leucine 61–arginine 82 and threonine 125–histidine 154. A leucine-zipper region spans residues leucine 62–leucine 100. A phosphothreonine mark is found at threonine 196 and threonine 199. 2 disordered regions span residues threonine 199–serine 234 and isoleucine 271–serine 425. Phosphoserine occurs at positions 203, 204, and 218. Residues serine 203 to alanine 219 show a composition bias toward acidic residues. The stretch at histidine 210–arginine 268 forms a coiled coil. The segment covering glutamate 220–serine 234 has biased composition (basic and acidic residues). The span at serine 274–serine 287 shows a compositional bias: polar residues. A phosphoserine mark is found at serine 283, serine 284, serine 287, serine 288, and serine 293. Positions arginine 303–aspartate 317 are enriched in basic and acidic residues. Phosphoserine occurs at positions 332, 341, 366, and 370. Threonine 375 is subject to Phosphothreonine. The segment covering isoleucine 376–valine 385 has biased composition (acidic residues). Phosphotyrosine is present on tyrosine 395. Residue serine 403 is modified to Phosphoserine.

This sequence belongs to the CAVIN family. Component of the CAVIN complex composed of CAVIN1, CAVIN2, CAVIN3 and CAVIN4. Binds to PRKCA in the presence of phosphatidylserine. Interacts with CAVIN4; this augments the transactivation of NPPA by CAVIN4. Interacts with CAVIN1. Interacts with CAV3. Post-translationally, phosphorylated on Ser residues. As to expression, highly expressed in heart and lung, and expressed at lower levels in brain, kidney, liver, pancreas, placenta, and skeletal muscle.

The protein resides in the cytoplasm. The protein localises to the cytosol. Its subcellular location is the membrane. It localises to the caveola. Functionally, plays an important role in caveolar biogenesis and morphology. Regulates caveolae morphology by inducing membrane curvature within caveolae. Plays a role in caveola formation in a tissue-specific manner. Required for the formation of caveolae in the lung and fat endothelia but not in the heart endothelia. Negatively regulates the size or stability of CAVIN complexes in the lung endothelial cells. May play a role in targeting PRKCA to caveolae. This Homo sapiens (Human) protein is Caveolae-associated protein 2.